The primary structure comprises 474 residues: ATP synthase subunit beta, chloroplastic (474 aa).

155–162 serves as a coordination point for ATP; that stretch reads GGAGVGKT.

Belongs to the ATPase alpha/beta chains family. F-type ATPases have 2 components, CF(1) - the catalytic core - and CF(0) - the membrane proton channel. CF(1) has five subunits: alpha(3), beta(3), gamma(1), delta(1), epsilon(1). CF(0) has four main subunits: a(1), b(1), b'(1) and c(9-12).

It localises to the plastid. The protein resides in the chloroplast thylakoid membrane. It carries out the reaction ATP + H2O + 4 H(+)(in) = ADP + phosphate + 5 H(+)(out). Produces ATP from ADP in the presence of a proton gradient across the membrane. The catalytic sites are hosted primarily by the beta subunits. This chain is ATP synthase subunit beta, chloroplastic, found in Thalassiosira pseudonana (Marine diatom).